The following is a 167-amino-acid chain: Zymogen granule membrane protein 16 (167 aa).

The signal sequence occupies residues 1–16 (MLTVALLALLCASASG). A Jacalin-type lectin domain is found at 24-159 (SSYSGEYGGG…IDAIGLHWDV (136 aa)).

The protein belongs to the jacalin lectin family. As to expression, highly expressed in liver. Detected at lower levels in colon, ileum and jejunum.

It localises to the secreted. The protein resides in the extracellular space. It is found in the extracellular matrix. Its subcellular location is the zymogen granule lumen. The protein localises to the golgi apparatus lumen. Functionally, may play a role in protein trafficking. May act as a linker molecule between the submembranous matrix on the luminal side of zymogen granule membrane (ZGM) and aggregated secretory proteins during granule formation in the TGN. This chain is Zymogen granule membrane protein 16 (ZG16), found in Homo sapiens (Human).